A 411-amino-acid polypeptide reads, in one-letter code: MDKLLDRFFNYVSFDTQAKANVKSVPSTQGQRKLAQALQQELLTLGFSHVTLSDHGCVMATLPANVSWPVPTIGFIAHLDTSPDFSGKNVNPQIVENYRGGDIALGIGDEVLSPVMFPVLHQLLGHTLITTDGKTLLGADDKAGIAEIITAMVRLKHRNVPHGDIRIAFTPDEEVGKGAQFFNVAEFDAQWAYTVDGGGIGELEFENFNAASVAIKIVGNNVHPGSAKGVMVNALSLATRYHQELPVDETPECTEGYDGFYHLQSIKGTVERAEMHYIVRDFNRDSFEARKKNMVDIAKRVGKGLHRDCYIEIVIDDSYYNMREQIIKHPHIIELAQQAMLDCDITPIMKPIRGGTDGAQLSFKGLPCPNIFTGGYNYHGKHEFITLEGMEKAVAVIMRISELTAKRAKES.

Histidine 78 serves as a coordination point for Zn(2+). Aspartate 80 is a catalytic residue. Aspartate 140 serves as a coordination point for Zn(2+). Glutamate 173 acts as the Proton acceptor in catalysis. The Zn(2+) site is built by glutamate 174, aspartate 196, and histidine 379.

The protein belongs to the peptidase M20B family. The cofactor is Zn(2+).

It localises to the cytoplasm. It catalyses the reaction Release of the N-terminal residue from a tripeptide.. Functionally, cleaves the N-terminal amino acid of tripeptides. The chain is Peptidase T from Yersinia pestis bv. Antiqua (strain Antiqua).